A 226-amino-acid chain; its full sequence is NADH-ubiquinone oxidoreductase chain 6 (226 aa).

A run of 5 helical transmembrane segments spans residues 2–22 (STLG…LVIL), 28–48 (IYSI…LLTV), 56–76 (IYIL…VMMI), 90–110 (YNIY…ILIT), and 169–189 (IWFI…IYIT).

The protein belongs to the complex I subunit 6 family.

The protein localises to the mitochondrion membrane. The enzyme catalyses a ubiquinone + NADH + 5 H(+)(in) = a ubiquinol + NAD(+) + 4 H(+)(out). Functionally, core subunit of the mitochondrial membrane respiratory chain NADH dehydrogenase (Complex I) that is believed to belong to the minimal assembly required for catalysis. Complex I functions in the transfer of electrons from NADH to the respiratory chain. The immediate electron acceptor for the enzyme is believed to be ubiquinone. The sequence is that of NADH-ubiquinone oxidoreductase chain 6 (nad6) from Dictyostelium discoideum (Social amoeba).